Reading from the N-terminus, the 292-residue chain is Ribosomal protein L11 methyltransferase (292 aa).

Residues T144, G165, D187, and N229 each contribute to the S-adenosyl-L-methionine site.

The protein belongs to the methyltransferase superfamily. PrmA family.

The protein resides in the cytoplasm. The catalysed reaction is L-lysyl-[protein] + 3 S-adenosyl-L-methionine = N(6),N(6),N(6)-trimethyl-L-lysyl-[protein] + 3 S-adenosyl-L-homocysteine + 3 H(+). Its function is as follows. Methylates ribosomal protein L11. The protein is Ribosomal protein L11 methyltransferase of Ectopseudomonas mendocina (strain ymp) (Pseudomonas mendocina).